The sequence spans 500 residues: Glycerol kinase (500 aa).

Position 13 (Thr-13) interacts with ADP. 3 residues coordinate ATP: Thr-13, Thr-14, and Ser-15. Thr-13 lines the sn-glycerol 3-phosphate pocket. Arg-17 provides a ligand contact to ADP. The sn-glycerol 3-phosphate site is built by Arg-83, Glu-84, Tyr-136, and Asp-246. Arg-83, Glu-84, Tyr-136, Asp-246, and Gln-247 together coordinate glycerol. ADP-binding residues include Thr-268 and Gly-311. ATP is bound by residues Thr-268, Gly-311, Gln-315, and Gly-412. Residues Gly-412 and Asn-416 each coordinate ADP.

Belongs to the FGGY kinase family.

It catalyses the reaction glycerol + ATP = sn-glycerol 3-phosphate + ADP + H(+). Its pathway is polyol metabolism; glycerol degradation via glycerol kinase pathway; sn-glycerol 3-phosphate from glycerol: step 1/1. Its activity is regulated as follows. Inhibited by fructose 1,6-bisphosphate (FBP). In terms of biological role, key enzyme in the regulation of glycerol uptake and metabolism. Catalyzes the phosphorylation of glycerol to yield sn-glycerol 3-phosphate. The sequence is that of Glycerol kinase from Francisella tularensis subsp. novicida (strain U112).